The following is a 169-amino-acid chain: Large ribosomal subunit protein uL5 (169 aa).

Belongs to the universal ribosomal protein uL5 family. In terms of assembly, part of the 50S ribosomal subunit; contacts the 5S rRNA and probably tRNA. Forms a bridge to the 30S subunit in the 70S ribosome.

Its function is as follows. This is one of the proteins that bind and probably mediate the attachment of the 5S RNA into the large ribosomal subunit, where it forms part of the central protuberance. In the 70S ribosome it contacts protein S13 of the 30S subunit (bridge B1b), connecting the 2 subunits; this bridge is implicated in subunit movement. May contact the P site tRNA; the 5S rRNA and some of its associated proteins might help stabilize positioning of ribosome-bound tRNAs. The polypeptide is Large ribosomal subunit protein uL5 (Cenarchaeum symbiosum (strain A)).